We begin with the raw amino-acid sequence, 1220 residues long: Bud site selection protein RAX2 (1220 aa).

The N-terminal stretch at 1 to 20 (MFVHRLWTLAFPFLVEISKA) is a signal peptide. At 21 to 1162 (SQLENIKSLL…KKKKIGRGFV (1142 aa)) the chain is on the extracellular side. 52 N-linked (GlcNAc...) asparagine glycosylation sites follow: N41, N45, N69, N88, N124, N134, N145, N158, N166, N171, N187, N200, N235, N238, N244, N333, N365, N379, N432, N445, N516, N524, N613, N620, N626, N640, N677, N705, N713, N721, N731, N749, N758, N792, N821, N848, N861, N884, N890, N908, N923, N942, N956, N980, N983, N1011, N1024, N1031, N1060, N1071, N1098, and N1126. The disordered stretch occupies residues 1129 to 1151 (VTSPQSTSSQPPSSSASSESKSK). Positions 1131 to 1147 (SPQSTSSQPPSSSASSE) are enriched in low complexity. The helical transmembrane segment at 1163–1183 (VLIGLALALGTVSVLGIAGVI) threads the bilayer. At 1184–1220 (LAYVFKDPEGDYKPIKPRIDENEMLDTVPPEKLMKFV) the chain is on the cytoplasmic side.

This sequence belongs to the RAX2 family. Forms an heterodimeric complex with RAX1. Interacts with BUD8 at the proximal or distal pole in unbudded cells. Interacts with BUD9 at the birth scar in budded mother cells. In terms of processing, glycosylated.

It is found in the cell membrane. Its subcellular location is the bud neck. The protein localises to the bud tip. Its function is as follows. Required for the maintenance of the bipolar budding pattern. Involved in selecting bud sites at both the distal and proximal poles of daughter cells as well as near previously used division sites on mother cells. The RAX1-RAX2 complex performs the asymmetric localization of the two cortical landmarks, BUD8 and BUD9, at the distal and proximal poles, respectively. In Saccharomyces cerevisiae (strain ATCC 204508 / S288c) (Baker's yeast), this protein is Bud site selection protein RAX2 (RAX2).